The chain runs to 234 residues: tRNA (guanine-N(1)-)-methyltransferase (234 aa).

S-adenosyl-L-methionine-binding positions include Gly-112 and 132–137 (IGDFIL).

The protein belongs to the RNA methyltransferase TrmD family. As to quaternary structure, homodimer.

The protein localises to the cytoplasm. The catalysed reaction is guanosine(37) in tRNA + S-adenosyl-L-methionine = N(1)-methylguanosine(37) in tRNA + S-adenosyl-L-homocysteine + H(+). Functionally, specifically methylates guanosine-37 in various tRNAs. The chain is tRNA (guanine-N(1)-)-methyltransferase from Campylobacter jejuni subsp. jejuni serotype O:6 (strain 81116 / NCTC 11828).